We begin with the raw amino-acid sequence, 226 residues long: uncharacterized protein (226 aa).

An HTH arsR-type domain is found at Met1–Lys92. Positions Ala32–Glu55 form a DNA-binding region, H-T-H motif.

This is an uncharacterized protein from Bacillus subtilis (strain 168).